Reading from the N-terminus, the 338-residue chain is DNA-directed RNA polymerase subunit alpha (338 aa).

The segment at 1 to 233 is alpha N-terminal domain (alpha-NTD); it reads MLREEVAVST…DLFIPFLHAE (233 aa). An alpha C-terminal domain (alpha-CTD) region spans residues 266 to 338; it reads IALKFIFIDQ…IDLPKNKFSN (73 aa).

The protein belongs to the RNA polymerase alpha chain family. In terms of assembly, in plastids the minimal PEP RNA polymerase catalytic core is composed of four subunits: alpha, beta, beta', and beta''. When a (nuclear-encoded) sigma factor is associated with the core the holoenzyme is formed, which can initiate transcription.

It is found in the plastid. The protein resides in the chloroplast. The enzyme catalyses RNA(n) + a ribonucleoside 5'-triphosphate = RNA(n+1) + diphosphate. In terms of biological role, DNA-dependent RNA polymerase catalyzes the transcription of DNA into RNA using the four ribonucleoside triphosphates as substrates. This chain is DNA-directed RNA polymerase subunit alpha, found in Nandina domestica (Heavenly bamboo).